Here is a 229-residue protein sequence, read N- to C-terminus: UPF0758 protein MA_1979 (229 aa).

The MPN domain maps to 106 to 228 (KICSPKDVYA…YVSLKDEGFV (123 aa)). Positions 177, 179, and 190 each coordinate Zn(2+). Positions 177–190 (HNHPSGDPSPSRED) match the JAMM motif motif.

This sequence belongs to the UPF0758 family.

The sequence is that of UPF0758 protein MA_1979 from Methanosarcina acetivorans (strain ATCC 35395 / DSM 2834 / JCM 12185 / C2A).